The chain runs to 552 residues: Urocanate hydratase (552 aa).

Residues 49–50 (GG), Q127, 173–175 (GMG), D193, 239–240 (NA), 260–264 (QTSAH), 270–271 (YI), and Y319 contribute to the NAD(+) site. Residue C407 is part of the active site. G489 contacts NAD(+).

Belongs to the urocanase family. Requires NAD(+) as cofactor.

The protein resides in the cytoplasm. The catalysed reaction is 4-imidazolone-5-propanoate = trans-urocanate + H2O. It participates in amino-acid degradation; L-histidine degradation into L-glutamate; N-formimidoyl-L-glutamate from L-histidine: step 2/3. Its function is as follows. Catalyzes the conversion of urocanate to 4-imidazolone-5-propionate. The protein is Urocanate hydratase of Bacillus cereus (strain ATCC 10987 / NRS 248).